The sequence spans 222 residues: Superoxide dismutase [Mn], mitochondrial (222 aa).

The N-terminal 24 residues, 1 to 24 (MLSRAVCGTGRQLAPALGYLGSRQ), are a transit peptide targeting the mitochondrion. Histidine 50 is a Mn(2+) binding site. 3'-nitrotyrosine is present on tyrosine 58. Lysine 68 and lysine 75 each carry N6-acetyllysine; alternate. Residues lysine 68 and lysine 75 each carry the N6-succinyllysine; alternate modification. Histidine 98 serves as a coordination point for Mn(2+). Lysine 114 carries the post-translational modification N6-acetyllysine. Residues lysine 122 and lysine 130 each carry the N6-acetyllysine; alternate modification. Residues lysine 122 and lysine 130 each carry the N6-succinyllysine; alternate modification. Aspartate 183 and histidine 187 together coordinate Mn(2+). Lysine 202 carries the post-translational modification N6-acetyllysine.

The protein belongs to the iron/manganese superoxide dismutase family. In terms of assembly, homotetramer. Mn(2+) serves as cofactor. Post-translationally, nitrated under oxidative stress. Nitration coupled with oxidation inhibits the catalytic activity. In terms of processing, acetylation at Lys-122 decreases enzymatic activity. Deacetylated by SIRT3 upon exposure to ionizing radiations or after long fasting. Polyubiquitinated; leading to proteasomal degradation. Deubiquitinated by USP36 which increases protein stability.

The protein resides in the mitochondrion matrix. The enzyme catalyses 2 superoxide + 2 H(+) = H2O2 + O2. Destroys superoxide anion radicals which are normally produced within the cells and which are toxic to biological systems. This chain is Superoxide dismutase [Mn], mitochondrial (SOD2), found in Macaca fascicularis (Crab-eating macaque).